A 323-amino-acid chain; its full sequence is Aldo-keto reductase family 1 member C1 (323 aa).

NADP(+)-binding positions include 20-24 (GFGTY) and aspartate 50. Tyrosine 24 contacts substrate. The active-site Proton donor is the tyrosine 55. Histidine 117 is a binding site for substrate. Residues 166–167 (SN), glutamine 190, and 216–222 (YSALGSH) each bind NADP(+). Residues histidine 222 and tryptophan 227 each coordinate substrate. Residue 270-280 (KSYNEQRIRQN) coordinates NADP(+).

It belongs to the aldo/keto reductase family. As to quaternary structure, monomer. As to expression, expressed in all tissues tested including liver, prostate, testis, adrenal gland, brain, uterus, mammary gland and keratinocytes. Highest levels found in liver, mammary gland and brain.

It is found in the cytoplasm. It localises to the cytosol. It catalyses the reaction a 3alpha-hydroxysteroid + NADP(+) = a 3-oxosteroid + NADPH + H(+). The catalysed reaction is a 3alpha-hydroxysteroid + NAD(+) = a 3-oxosteroid + NADH + H(+). It carries out the reaction (17R,20S)-17,20-dihydroxypregn-4-en-3-one + NADP(+) = 17alpha-hydroxyprogesterone + NADPH + H(+). The enzyme catalyses (17R,20S)-17,20-dihydroxypregn-4-en-3-one + NAD(+) = 17alpha-hydroxyprogesterone + NADH + H(+). It catalyses the reaction (20S)-hydroxypregn-4-en-3-one + NADP(+) = progesterone + NADPH + H(+). The catalysed reaction is (20S)-hydroxypregn-4-en-3-one + NAD(+) = progesterone + NADH + H(+). It carries out the reaction (1R,2R)-1,2-dihydrobenzene-1,2-diol + NADP(+) = catechol + NADPH + H(+). The enzyme catalyses (S)-indan-1-ol + NAD(+) = indan-1-one + NADH + H(+). It catalyses the reaction (S)-indan-1-ol + NADP(+) = indan-1-one + NADPH + H(+). The catalysed reaction is 5alpha-androstane-3alpha,17beta-diol + NADP(+) = 17beta-hydroxy-5alpha-androstan-3-one + NADPH + H(+). It carries out the reaction 5alpha-androstane-3beta,17beta-diol + NADP(+) = 17beta-hydroxy-5alpha-androstan-3-one + NADPH + H(+). The enzyme catalyses 5alpha-androstane-3alpha,17beta-diol + NAD(+) = 17beta-hydroxy-5alpha-androstan-3-one + NADH + H(+). It catalyses the reaction 17beta-hydroxy-5alpha-androstan-3-one + NADP(+) = 5alpha-androstan-3,17-dione + NADPH + H(+). The catalysed reaction is androsterone + NADP(+) = 5alpha-androstan-3,17-dione + NADPH + H(+). It carries out the reaction androsterone + NADPH + H(+) = 5alpha-androstane-3alpha,17beta-diol + NADP(+). The enzyme catalyses 5alpha-androstane-3alpha,17beta-diol + NAD(+) = androsterone + NADH + H(+). It catalyses the reaction 17beta-estradiol + NADP(+) = estrone + NADPH + H(+). The catalysed reaction is 17beta-estradiol + NAD(+) = estrone + NADH + H(+). It carries out the reaction testosterone + NADP(+) = androst-4-ene-3,17-dione + NADPH + H(+). The enzyme catalyses 20alpha-hydroxy-5beta-pregnan-3-one + NADP(+) = 5beta-pregnan-3,20-dione + NADPH + H(+). It catalyses the reaction 3beta-hydroxy-5beta-pregnane-20-one + NADP(+) = 5beta-pregnan-3,20-dione + NADPH + H(+). The catalysed reaction is 3beta-hydroxy-5beta-pregnane-20-one + NADPH + H(+) = 3beta,20alpha-dihydroxy-5beta-pregnane + NADP(+). It carries out the reaction (3beta,5alpha,17beta)-3-hydroxyandrostan-17-yl sulfate + NADP(+) = 5alpha-dihydrotestosterone sulfate + NADPH + H(+). It participates in steroid metabolism. With respect to regulation, inhibited by hexestrol with an IC(50) of 9.5 uM, 1,10-phenanthroline with an IC(50) of 55 uM, 1,7-phenanthroline with an IC(50) of 72 uM, flufenamic acid with an IC(50) of 6.0 uM, indomethacin with an IC(50) of 140 uM, ibuprofen with an IC(50) of 950 uM, lithocholic acid with an IC(50) of 25 uM, ursodeoxycholic acid with an IC(50) of 340 uM and chenodeoxycholic acid with an IC(50) of 570 uM. The oxidation reaction is inhibited by low micromolar concentrations of NADPH. In terms of biological role, cytosolic aldo-keto reductase that catalyzes the NADH and NADPH-dependent reduction of ketosteroids to hydroxysteroids. Most probably acts as a reductase in vivo since the oxidase activity measured in vitro is inhibited by physiological concentrations of NADPH. Displays a broad positional specificity acting on positions 3, 17 and 20 of steroids and regulates the metabolism of hormones like estrogens and androgens. May also reduce conjugated steroids such as 5alpha-dihydrotestosterone sulfate. Displays affinity for bile acids. This is Aldo-keto reductase family 1 member C1 (AKR1C1) from Homo sapiens (Human).